The following is a 279-amino-acid chain: MKIENKEIASNWFTDLRDLLCKEFEKIEEEYAQTKGLKPAKFVRTSWQRNGGGGGIMSLMKGEVFEKVGVNISTVFGEFSPEFRSEIPGAELDGKFFATGISLVAHLKSPLIPAMHFNTRYIETSKSWFGGGGDLTPFYPKENETAKFHAAFKEACDKYDSSYYPKFKKQCDEYFYLKHRKEPRGVGGIFYDYLNSGNFEQDFAFTQDVGRALLSVYPEIVRSKLFLPWTTEQKEYQLIRRGRYVEFNLLYDRGTKFGLMTDGNVEAILMSLPPEVKFN.

Position 102 (serine 102) interacts with substrate. A divalent metal cation is bound by residues histidine 106 and histidine 116. The active-site Proton donor is histidine 116. 118–120 serves as a coordination point for substrate; that stretch reads NTR. The a divalent metal cation site is built by histidine 149 and histidine 179. The important for dimerization stretch occupies residues 244-279; sequence YVEFNLLYDRGTKFGLMTDGNVEAILMSLPPEVKFN.

This sequence belongs to the aerobic coproporphyrinogen-III oxidase family. Homodimer. Requires a divalent metal cation as cofactor.

Its subcellular location is the cytoplasm. It catalyses the reaction coproporphyrinogen III + O2 + 2 H(+) = protoporphyrinogen IX + 2 CO2 + 2 H2O. The protein operates within porphyrin-containing compound metabolism; protoporphyrin-IX biosynthesis; protoporphyrinogen-IX from coproporphyrinogen-III (O2 route): step 1/1. In terms of biological role, involved in the heme biosynthesis. Catalyzes the aerobic oxidative decarboxylation of propionate groups of rings A and B of coproporphyrinogen-III to yield the vinyl groups in protoporphyrinogen-IX. This Rickettsia felis (strain ATCC VR-1525 / URRWXCal2) (Rickettsia azadi) protein is Oxygen-dependent coproporphyrinogen-III oxidase.